Consider the following 424-residue polypeptide: Histidine--tRNA ligase (424 aa).

The protein belongs to the class-II aminoacyl-tRNA synthetase family. Homodimer.

The protein localises to the cytoplasm. The enzyme catalyses tRNA(His) + L-histidine + ATP = L-histidyl-tRNA(His) + AMP + diphosphate + H(+). In Shewanella halifaxensis (strain HAW-EB4), this protein is Histidine--tRNA ligase.